The chain runs to 176 residues: Translation initiation factor IF-3 (176 aa).

The protein belongs to the IF-3 family. In terms of assembly, monomer.

Its subcellular location is the cytoplasm. Functionally, IF-3 binds to the 30S ribosomal subunit and shifts the equilibrium between 70S ribosomes and their 50S and 30S subunits in favor of the free subunits, thus enhancing the availability of 30S subunits on which protein synthesis initiation begins. This is Translation initiation factor IF-3 from Streptococcus mutans serotype c (strain ATCC 700610 / UA159).